A 764-amino-acid chain; its full sequence is 5-methyltetrahydropteroyltriglutamate--homocysteine methyltransferase (764 aa).

5-methyltetrahydropteroyltri-L-glutamate-binding positions include 16–19 and K117; that span reads RELK. L-homocysteine is bound by residues 442–444 and E495; that span reads IGS. Residues 442-444 and E495 contribute to the L-methionine site; that span reads IGS. 5-methyltetrahydropteroyltri-L-glutamate contacts are provided by residues 526 to 527 and W572; that span reads RC. An L-homocysteine-binding site is contributed by D610. D610 contacts L-methionine. Position 616 (E616) interacts with 5-methyltetrahydropteroyltri-L-glutamate. Residues H652, C654, and E676 each coordinate Zn(2+). The Proton donor role is filled by H705. C737 serves as a coordination point for Zn(2+).

The protein belongs to the vitamin-B12 independent methionine synthase family. It depends on Zn(2+) as a cofactor.

It carries out the reaction 5-methyltetrahydropteroyltri-L-glutamate + L-homocysteine = tetrahydropteroyltri-L-glutamate + L-methionine. It participates in amino-acid biosynthesis; L-methionine biosynthesis via de novo pathway; L-methionine from L-homocysteine (MetE route): step 1/1. In terms of biological role, catalyzes the transfer of a methyl group from 5-methyltetrahydrofolate to homocysteine resulting in methionine formation. The protein is 5-methyltetrahydropteroyltriglutamate--homocysteine methyltransferase of Bordetella petrii (strain ATCC BAA-461 / DSM 12804 / CCUG 43448).